The chain runs to 346 residues: Elongation factor Ts (346 aa).

The involved in Mg(2+) ion dislocation from EF-Tu stretch occupies residues 80–83 (TDFV).

It belongs to the EF-Ts family.

It is found in the cytoplasm. Associates with the EF-Tu.GDP complex and induces the exchange of GDP to GTP. It remains bound to the aminoacyl-tRNA.EF-Tu.GTP complex up to the GTP hydrolysis stage on the ribosome. The protein is Elongation factor Ts of Streptococcus pyogenes serotype M3 (strain ATCC BAA-595 / MGAS315).